Consider the following 539-residue polypeptide: Kynureninase 2 (539 aa).

A disordered region spans residues 60 to 87 (DGGVAGETKEPRVPNGVSSATKPNGTVN). Over residues 75 to 87 (GVSSATKPNGTVN) the composition is skewed to polar residues. Pyridoxal 5'-phosphate contacts are provided by residues Leu171, Thr172, 199-202 (FPSD), Asp290, His293, and Tyr315. The residue at position 316 (Lys316) is an N6-(pyridoxal phosphate)lysine. Gly residues predominate over residues 340–352 (GGGGSGGVGGGRG). Residues 340 to 363 (GGGGSGGVGGGRGEGGDGDGGDGG) are disordered. Pyridoxal 5'-phosphate is bound by residues Trp379 and Asn407.

This sequence belongs to the kynureninase family. As to quaternary structure, homodimer. It depends on pyridoxal 5'-phosphate as a cofactor.

The protein localises to the cytoplasm. The enzyme catalyses L-kynurenine + H2O = anthranilate + L-alanine + H(+). It catalyses the reaction 3-hydroxy-L-kynurenine + H2O = 3-hydroxyanthranilate + L-alanine + H(+). It functions in the pathway amino-acid degradation; L-kynurenine degradation; L-alanine and anthranilate from L-kynurenine: step 1/1. The protein operates within cofactor biosynthesis; NAD(+) biosynthesis; quinolinate from L-kynurenine: step 2/3. In terms of biological role, catalyzes the cleavage of L-kynurenine (L-Kyn) and L-3-hydroxykynurenine (L-3OHKyn) into anthranilic acid (AA) and 3-hydroxyanthranilic acid (3-OHAA), respectively. In Chaetomium globosum (strain ATCC 6205 / CBS 148.51 / DSM 1962 / NBRC 6347 / NRRL 1970) (Soil fungus), this protein is Kynureninase 2.